Reading from the N-terminus, the 201-residue chain is 3-isopropylmalate dehydratase small subunit (201 aa).

Belongs to the LeuD family. LeuD type 1 subfamily. Heterodimer of LeuC and LeuD.

It carries out the reaction (2R,3S)-3-isopropylmalate = (2S)-2-isopropylmalate. It functions in the pathway amino-acid biosynthesis; L-leucine biosynthesis; L-leucine from 3-methyl-2-oxobutanoate: step 2/4. Functionally, catalyzes the isomerization between 2-isopropylmalate and 3-isopropylmalate, via the formation of 2-isopropylmaleate. The protein is 3-isopropylmalate dehydratase small subunit of Shewanella denitrificans (strain OS217 / ATCC BAA-1090 / DSM 15013).